The following is a 351-amino-acid chain: Cytoplasmic dynein 2 light intermediate chain 1 (351 aa).

Residues 304 to 335 are disordered; the sequence is TLKAIQDPARDPQYAESEVDEMRVQKDQELEQ. Basic and acidic residues predominate over residues 323–335; that stretch reads DEMRVQKDQELEQ.

Belongs to the dynein light intermediate chain family. In terms of assembly, light intermediate chain of the cytoplasmic dynein complex 2, a multisubunit complex composed at least of eleven different proteins. The cytoplasmic dynein 2 complex consists of two catalytic heavy chains (HCs) and a number of non-catalytic subunits presented by intermediate chains (ICs), light intermediate chains (LICs) and light chains (LCs). Among them, a heavy chain (DYNC2H1), two intermediate chains (DYNC2I2 and DYNC2I1), a light intermediate chain (DYNC2LI1), and a light chain (DYNLT2B) are unique to the dynein-2 complex, but a subset of light chains are also shared by dynein-1 and dynein-2 complexes. Dynein-2 complex is built around two copies of cytoplasmic dynein 2 heavy chain 1 (DYNC2H1). The C-terminal region forms the motor domain, which converts the energy from ATP hydrolysis into movement. Its N-terminal region forms the tail, an extended structure that binds the other subunits and holds the two heavy chains in a homodimer. Interacts with DYNC2H1 (via N-terminus); this interaction stabilizes the dynein-2 complex structure.

The protein resides in the cytoplasm. The protein localises to the cell projection. It localises to the cilium. Its subcellular location is the cytoskeleton. It is found in the cilium basal body. The protein resides in the cilium axoneme. The protein localises to the microtubule organizing center. It localises to the centrosome. In terms of biological role, acts as one of several non-catalytic accessory components of the cytoplasmic dynein 2 complex (dynein-2 complex), a motor protein complex that drives the movement of cargos along microtubules within cilia and flagella in concert with the intraflagellar transport (IFT) system, facilitating the assembly of these organelles. Involved in the regulation of ciliary length. This is Cytoplasmic dynein 2 light intermediate chain 1 (Dync2li1) from Rattus norvegicus (Rat).